A 301-amino-acid polypeptide reads, in one-letter code: Inosose dehydratase (301 aa).

The protein belongs to the IolE/MocC family. Glutathione is required as a cofactor. The cofactor is Co(2+). Requires Mn(2+) as cofactor.

The enzyme catalyses scyllo-inosose = 3D-3,5/4-trihydroxycyclohexane-1,2-dione + H2O. Its function is as follows. Catalyzes the dehydration of inosose (2-keto-myo-inositol, 2KMI or 2,4,6/3,5-pentahydroxycyclohexanone) to 3D-(3,5/4)-trihydroxycyclohexane-1,2-dione (D-2,3-diketo-4-deoxy-epi-inositol). The sequence is that of Inosose dehydratase from Salmonella typhimurium (strain LT2 / SGSC1412 / ATCC 700720).